Consider the following 266-residue polypeptide: Thiazole synthase (266 aa).

The active-site Schiff-base intermediate with DXP is Lys106. Residues Gly167, 193-194 (AG), and 215-216 (NT) each bind 1-deoxy-D-xylulose 5-phosphate.

It belongs to the ThiG family. Homotetramer. Forms heterodimers with either ThiH or ThiS.

Its subcellular location is the plastid. The protein localises to the chloroplast. It carries out the reaction [ThiS sulfur-carrier protein]-C-terminal-Gly-aminoethanethioate + 2-iminoacetate + 1-deoxy-D-xylulose 5-phosphate = [ThiS sulfur-carrier protein]-C-terminal Gly-Gly + 2-[(2R,5Z)-2-carboxy-4-methylthiazol-5(2H)-ylidene]ethyl phosphate + 2 H2O + H(+). It participates in cofactor biosynthesis; thiamine diphosphate biosynthesis. Its function is as follows. Catalyzes the rearrangement of 1-deoxy-D-xylulose 5-phosphate (DXP) to produce the thiazole phosphate moiety of thiamine. Sulfur is provided by the thiocarboxylate moiety of the carrier protein ThiS. In vitro, sulfur can be provided by H(2)S. The protein is Thiazole synthase of Cyanidium caldarium (Red alga).